Reading from the N-terminus, the 245-residue chain is Small ribosomal subunit protein uS2 (245 aa).

Belongs to the universal ribosomal protein uS2 family.

In Pseudomonas fluorescens (strain SBW25), this protein is Small ribosomal subunit protein uS2.